The primary structure comprises 373 residues: LIM domain-binding protein 2 (373 aa).

Disordered stretches follow at residues 244–291 (APPA…ANLS) and 327–373 (QYDA…QASQ). Over residues 263-280 (STSSTSNSSAGNNANSTG) the composition is skewed to low complexity. Positions 298-337 (DVMVVGEPTLMGGEFGDEDERLITRLENTQYDAANGMDDE) constitute an LIM interaction domain (LID) domain. Residues 341-361 (NNSPALGNNSPWNSKPPATQE) show a composition bias toward polar residues.

Belongs to the LDB family. Interacts with LHX9. Interacts with SLK; leading to negatively regulate SLK kinase activity. Interacts with LMO4. Ubiquitinated by RLIM/RNF12, leading to its degradation by the proteasome.

The protein resides in the nucleus. Its function is as follows. Transcription cofactor. Binds to the LIM domain of a wide variety of LIM domain-containing transcription factors. The sequence is that of LIM domain-binding protein 2 (LDB2) from Homo sapiens (Human).